A 78-amino-acid chain; its full sequence is Large ribosomal subunit protein bL28 (78 aa).

This sequence belongs to the bacterial ribosomal protein bL28 family.

In Trichormus variabilis (strain ATCC 29413 / PCC 7937) (Anabaena variabilis), this protein is Large ribosomal subunit protein bL28.